The following is a 447-amino-acid chain: MKLFGTSGIRMKNLDPLIAYKVGFAISKNFKKAVIGRDTRTTGNLIESAITAGLLNGGCDVTTIGMVPTPVLGYSAKDYDLGIMITASHNPPEYNGIKLFNKNGTAFDPKQEKELENIINNDDFNECTWDNIGCVVEDKTAVKKYFEYILQNLNLNTNFNVVVDCANAAGCVVSPNIFTEAGCKVISVNSHCDGRFVGRMPEPNETNLKETVDIIKGLNSNGRNYVGIAHDGDADRMIAIDELGRVTDFDKLLAAFCKYLVQKTGADKIVTTVDASMAIEEYLNEFGAKVIRTKIGDVAVAEELEKTGAIFGGEPSGTWIHRDIHLTPDGILSGLRVLEMMEFYGKKLHEIIDEVPSYCNMREKISCPDNLKQNVMDYVSKEGEKIFEKKPETLDGVRFSFENGWILIRPSGTESYVRVRVEAKEKDFAEKLMKTGISMVKTGISGK.

Residue S88 is the Phosphoserine intermediate of the active site. Mg(2+) is bound by residues S88, D231, D233, and D235. At S88 the chain carries Phosphoserine.

This sequence belongs to the phosphohexose mutase family. In terms of assembly, monomer. Also forms large aggregates. Mg(2+) serves as cofactor. Activated by phosphorylation. Glucose-1,6-bisphosphate or fructose-1,6-bisphosphate can activate the enzyme in vitro. However, since glucose-1,6-bisphosphate is not believed to form in methanogens, the physiologically relevant activator might be a serine kinase protein.

The catalysed reaction is alpha-D-glucosamine 1-phosphate = D-glucosamine 6-phosphate. Catalyzes the conversion of glucosamine-6-phosphate to glucosamine-1-phosphate. Also catalyzes the isomerization of glucose-1-phosphate to glucose-6-phosphate, but at a 5-fold lower rate. This Methanococcus maripaludis (strain DSM 14266 / JCM 13030 / NBRC 101832 / S2 / LL) protein is Phosphoglucosamine mutase (glmM).